The sequence spans 1175 residues: Major DNA-binding protein (1175 aa).

Residues 496 to 509 fold into a zinc finger; the sequence is CSLCDRASRPACAH. Residues 825–826 carry the Required for filament formation motif; sequence FW. Residues 1151-1175 are required for nuclear localization; sequence KRPPPEDDLFDMGAPPEKRLTFDML.

Belongs to the herpesviridae major DNA-binding protein family. As to quaternary structure, homooligomers. Forms double-helical filaments necessary for the formation of replication compartments within the host nucleus. Interacts with the origin-binding protein. Interacts with the helicase primase complex; this interaction stimulates primer synthesis activity of the helicase-primase complex. Interacts with the DNA polymerase. Interacts with the alkaline exonuclease; this interaction increases its nuclease processivity.

The protein localises to the host nucleus. Its function is as follows. Plays several crucial roles in viral infection. Participates in the opening of the viral DNA origin to initiate replication by interacting with the origin-binding protein. May disrupt loops, hairpins and other secondary structures present on ssDNA to reduce and eliminate pausing of viral DNA polymerase at specific sites during elongation. Promotes viral DNA recombination by performing strand-transfer, characterized by the ability to transfer a DNA strand from a linear duplex to a complementary single-stranded DNA circle. Can also catalyze the renaturation of complementary single strands. Additionally, reorganizes the host cell nucleus, leading to the formation of prereplicative sites and replication compartments. This process is driven by the protein which can form double-helical filaments in the absence of DNA. The sequence is that of Major DNA-binding protein from Suid herpesvirus 1 (SuHV-1).